The primary structure comprises 121 residues: Large ribosomal subunit protein uL22 (121 aa).

Belongs to the universal ribosomal protein uL22 family. As to quaternary structure, part of the 50S ribosomal subunit.

Functionally, this protein binds specifically to 23S rRNA; its binding is stimulated by other ribosomal proteins, e.g. L4, L17, and L20. It is important during the early stages of 50S assembly. It makes multiple contacts with different domains of the 23S rRNA in the assembled 50S subunit and ribosome. Its function is as follows. The globular domain of the protein is located near the polypeptide exit tunnel on the outside of the subunit, while an extended beta-hairpin is found that lines the wall of the exit tunnel in the center of the 70S ribosome. The chain is Large ribosomal subunit protein uL22 from Rickettsia massiliae (strain Mtu5).